The sequence spans 58 residues: Large ribosomal subunit protein bL32 (58 aa).

2 disordered regions span residues 1–22 (MAVPKKKTSNAKRDQRKAHWKR) and 39–58 (LSGRSNSFVYPQDEEEDDEE).

This sequence belongs to the bacterial ribosomal protein bL32 family.

This Crocosphaera subtropica (strain ATCC 51142 / BH68) (Cyanothece sp. (strain ATCC 51142)) protein is Large ribosomal subunit protein bL32.